A 182-amino-acid polypeptide reads, in one-letter code: uncharacterized protein (182 aa).

Helical transmembrane passes span 29 to 49 and 63 to 83; these read IISG…AGLP and FYFP…MLTL.

The protein localises to the cell membrane. This is an uncharacterized protein from Ureaplasma parvum serovar 3 (strain ATCC 700970).